The following is a 431-amino-acid chain: Inactive polypeptide N-acetylgalactosaminyltransferase-like protein 5 (431 aa).

Residues 1-4 lie on the Cytoplasmic side of the membrane; it reads MKSV. The chain crosses the membrane as a helical; Signal-anchor for type II membrane protein span at residues 5 to 27; that stretch reads IIQGLFCGFLAIGLWASMLLLFL. Residues 28–431 lie on the Lumenal side of the membrane; that stretch reads HLEQEDMLEN…TERKRKKNRF (404 aa). N-linked (GlcNAc...) asparagine glycosylation is present at Asn-68. Cystine bridges form between Cys-105-Cys-336 and Cys-327-Cys-403. Residues 114–224 form a catalytic subdomain A region; it reads LPTASIIICF…RVWLEPLLHA (111 aa). The tract at residues 282-344 is catalytic subdomain B; it reads PIRSPAMTGG…PCSRVGYNSK (63 aa). N-linked (GlcNAc...) asparagine glycosylation is found at Asn-353 and Asn-390.

The protein belongs to the glycosyltransferase 2 family. GalNAc-T subfamily. Requires Mn(2+) as cofactor. In terms of tissue distribution, expressed in testis. Mainly expressed in the round and elongated spermatids during spermiogenesis, not in the outermost cells of the seminiferous tubules, which contain spermatogonia and somatic Sertoli cells. Present in the juxtanuclear space in the round spermatids, not in the acrosomal vesicles. In the elongating spermatids, localizes strongly in the acroplaxome, the region between the developing acrosome and nucleus. During differentiation, also weakly detected in the transient manchette containing microtubules. In epididymal spermatozoa, weakly detected in the midpiece, but concentrates mainly in the neck region around the head-tail coupling apparatus (at protein level).

The protein localises to the late endosome membrane. In terms of biological role, probable inactive glycosyltransferase required during spermatid development. May participate in protein loading into the acrosomes and accumulation of ubiquitin-proteasome systems around the head-tail coupling apparatus region. The chain is Inactive polypeptide N-acetylgalactosaminyltransferase-like protein 5 (Galntl5) from Mus musculus (Mouse).